We begin with the raw amino-acid sequence, 163 residues long: Small ribosomal subunit protein uS5 (163 aa).

An S5 DRBM domain is found at 8–71 (FIEKVVSLNR…EQARKAMMKI (64 aa)).

It belongs to the universal ribosomal protein uS5 family. As to quaternary structure, part of the 30S ribosomal subunit. Contacts proteins S4 and S8.

In terms of biological role, with S4 and S12 plays an important role in translational accuracy. Its function is as follows. Located at the back of the 30S subunit body where it stabilizes the conformation of the head with respect to the body. The sequence is that of Small ribosomal subunit protein uS5 from Lawsonia intracellularis (strain PHE/MN1-00).